The sequence spans 614 residues: Dihydroxy-acid dehydratase (614 aa).

Asp-81 contacts Mg(2+). Position 122 (Cys-122) interacts with [2Fe-2S] cluster. Asp-123 and Lys-124 together coordinate Mg(2+). Lys-124 carries the N6-carboxylysine modification. [2Fe-2S] cluster is bound at residue Cys-195. Residue Glu-491 coordinates Mg(2+). Ser-517 functions as the Proton acceptor in the catalytic mechanism.

This sequence belongs to the IlvD/Edd family. Homodimer. Requires [2Fe-2S] cluster as cofactor. It depends on Mg(2+) as a cofactor.

It catalyses the reaction (2R)-2,3-dihydroxy-3-methylbutanoate = 3-methyl-2-oxobutanoate + H2O. It carries out the reaction (2R,3R)-2,3-dihydroxy-3-methylpentanoate = (S)-3-methyl-2-oxopentanoate + H2O. It participates in amino-acid biosynthesis; L-isoleucine biosynthesis; L-isoleucine from 2-oxobutanoate: step 3/4. Its pathway is amino-acid biosynthesis; L-valine biosynthesis; L-valine from pyruvate: step 3/4. Functions in the biosynthesis of branched-chain amino acids. Catalyzes the dehydration of (2R,3R)-2,3-dihydroxy-3-methylpentanoate (2,3-dihydroxy-3-methylvalerate) into 2-oxo-3-methylpentanoate (2-oxo-3-methylvalerate) and of (2R)-2,3-dihydroxy-3-methylbutanoate (2,3-dihydroxyisovalerate) into 2-oxo-3-methylbutanoate (2-oxoisovalerate), the penultimate precursor to L-isoleucine and L-valine, respectively. This chain is Dihydroxy-acid dehydratase, found in Nitrobacter winogradskyi (strain ATCC 25391 / DSM 10237 / CIP 104748 / NCIMB 11846 / Nb-255).